Here is a 341-residue protein sequence, read N- to C-terminus: MSSSEKQLSTPATIQTASTITICALYKFVRLDAYEALREPLSNKMASVDVKGTLLLAAEGINGTIAGPQTGIDTVLAFLGEQPGLDNISHKESYSEENPFHRTKVKLKKEIVTMGIEGIDPNQVVGTYVKPKDWNALISDPEVVLVDTRNDYEIEIGTFKNAINPNTETFREFPDYVAKNLDKNKHKKVAMYCTGGIRCEKSTAYLKEQGFEEVYHLEGGILKYLEEVPSTETMWEGECFVFDGRVAVNHELEQGQYDQCFACRFPLTDVEKESEHYVKGVSCHRCHDKVSEQQRSRYAERQRQISLAEERGESHIGGDIQNIIEERRQEKNDKKAKQANK.

Positions 139 to 233 constitute a Rhodanese domain; it reads SDPEVVLVDT…YLEEVPSTET (95 aa). Cys193 functions as the Cysteine persulfide intermediate in the catalytic mechanism. 2 stretches are compositionally biased toward basic and acidic residues: residues 306–316 and 324–341; these read SLAEERGESHI and IEERRQEKNDKKAKQANK. Residues 306 to 341 are disordered; the sequence is SLAEERGESHIGGDIQNIIEERRQEKNDKKAKQANK.

The protein belongs to the TrhO family.

It catalyses the reaction uridine(34) in tRNA + AH2 + O2 = 5-hydroxyuridine(34) in tRNA + A + H2O. Its function is as follows. Catalyzes oxygen-dependent 5-hydroxyuridine (ho5U) modification at position 34 in tRNAs. This Colwellia psychrerythraea (strain 34H / ATCC BAA-681) (Vibrio psychroerythus) protein is tRNA uridine(34) hydroxylase.